The following is a 73-amino-acid chain: uncharacterized protein (73 aa).

This sequence belongs to the asfivirus DP63R family.

This is an uncharacterized protein from African swine fever virus (isolate Tick/Malawi/Lil 20-1/1983) (ASFV).